The following is a 521-amino-acid chain: C-22 sterol desaturase erg5 (521 aa).

The helical transmembrane segment at 30 to 50 threads the bilayer; the sequence is AVLNGFTFWKALATLFFAAVI.

It belongs to the cytochrome P450 family. Heme serves as cofactor.

The protein resides in the endoplasmic reticulum membrane. It carries out the reaction 5-dehydroepisterol + NADPH + O2 + H(+) = ergosta-5,7,22,24(28)-tetraen-3beta-ol + NADP(+) + 2 H2O. It participates in steroid metabolism; ergosterol biosynthesis. Its function is as follows. C-22 sterol desaturase; part of the third module of ergosterol biosynthesis pathway that includes the late steps of the pathway. Erg5 converts 5-dehydroepisterol into ergosta-5,7,22,24(28)-tetraen-3beta-ol by forming the C-22(23) double bond in the sterol side chain. The third module or late pathway involves the ergosterol synthesis itself through consecutive reactions that mainly occur in the endoplasmic reticulum (ER) membrane. Firstly, the squalene synthase erg9 catalyzes the condensation of 2 farnesyl pyrophosphate moieties to form squalene, which is the precursor of all steroids. Squalene synthase is crucial for balancing the incorporation of farnesyl diphosphate (FPP) into sterol and nonsterol isoprene synthesis. Secondly, squalene is converted into lanosterol by the consecutive action of the squalene epoxidase erg1 and the lanosterol synthase erg7. Then, the delta(24)-sterol C-methyltransferase erg6 methylates lanosterol at C-24 to produce eburicol. Eburicol is the substrate of the sterol 14-alpha demethylase encoded by cyp51A and cyp51B, to yield 4,4,24-trimethyl ergosta-8,14,24(28)-trienol. The C-14 reductase erg24 then reduces the C14=C15 double bond which leads to 4,4-dimethylfecosterol. A sequence of further demethylations at C-4, involving the C-4 demethylation complex containing the C-4 methylsterol oxidases erg25A or erg25B, the sterol-4-alpha-carboxylate 3-dehydrogenase erg26 and the 3-keto-steroid reductase erg27, leads to the production of fecosterol via 4-methylfecosterol. The C-8 sterol isomerase erg2 then catalyzes the reaction which results in unsaturation at C-7 in the B ring of sterols and thus converts fecosterol to episterol. The sterol-C5-desaturase erg3B then catalyzes the introduction of a C-5 double bond in the B ring to produce 5-dehydroepisterol. The 2 other sterol-C5-desaturases, erg3A and erg3C, seem to be less important in ergosterol biosynthesis. The C-22 sterol desaturase erg5 further converts 5-dehydroepisterol into ergosta-5,7,22,24(28)-tetraen-3beta-ol by forming the C-22(23) double bond in the sterol side chain. Finally, ergosta-5,7,22,24(28)-tetraen-3beta-ol is substrate of the C-24(28) sterol reductases erg4A and erg4B to produce ergosterol. Possible alternative sterol biosynthetic pathways might exist from fecosterol to ergosterol, depending on the activities of the erg3 isoforms. This is C-22 sterol desaturase erg5 from Aspergillus fumigatus (strain ATCC MYA-4609 / CBS 101355 / FGSC A1100 / Af293) (Neosartorya fumigata).